The sequence spans 376 residues: Probable low-specificity L-threonine aldolase (376 aa).

Residues 1-21 (MSGSVTSTTTETRLCPSNQGS) are compositionally biased toward polar residues. The tract at residues 1-22 (MSGSVTSTTTETRLCPSNQGSA) is disordered. K226 is modified (N6-(pyridoxal phosphate)lysine).

The protein belongs to the threonine aldolase family. In terms of assembly, homotetramer. The cofactor is pyridoxal 5'-phosphate.

It carries out the reaction L-threonine = acetaldehyde + glycine. It catalyses the reaction L-allo-threonine = acetaldehyde + glycine. It functions in the pathway amino-acid degradation; L-threonine degradation via aldolase pathway; acetaldehyde and glycine from L-threonine: step 1/1. The protein is Probable low-specificity L-threonine aldolase (gly1) of Schizosaccharomyces pombe (strain 972 / ATCC 24843) (Fission yeast).